A 415-amino-acid polypeptide reads, in one-letter code: MKVEEHVPLIQESRKRKCQSSENASKRQQLLSKLPLRLHTGNENVDLSPLVSAIRKAKRIVVVTGAGISCDAGIPDFRSSEGLFSSLRAEYKLNCSGKELFDGSVYRDLKSVNIFHAMIRKLHMLSNNARPTDFHLFLSQLAQESKLLRLYTQNIDFLETRLEGLQTCIPLPQSAPWPTTIPLHGTLEVVSCTRCSFLKKFNPDIFDRNGVTVCPDCKTENEVRRIAGKRSVIEGCLRPRIVLYNEIHPDSESIGSVCSQDLKSRPDCLIVAGTSCKIPGVKRIIKEMSNCVHKQKGNVIWLNYDEPTKDFLNLCDLVVQGDLQIAIRRLKPLLDAPSWKLKSHSAKRTSKQKSSEQTKITSSTKITKAIGLNTKSNDSSKKDNTSFQLHQVLNSIEIPKVEIKQEVEYATPSPL.

The tract at residues 1–26 is disordered; it reads MKVEEHVPLIQESRKRKCQSSENASK. Residues 40–337 form the Deacetylase sirtuin-type domain; that stretch reads TGNENVDLSP…RRLKPLLDAP (298 aa). NAD(+)-binding positions include 65–84 and 153–156; these read GAGISCDAGIPDFRSSEGLF and QNID. H184 functions as the Proton acceptor in the catalytic mechanism. Zn(2+) is bound by residues C192, C195, C214, and C217. NAD(+)-binding positions include 273–275, 303–305, and L323; these read GTS and NYD.

It belongs to the sirtuin family. Class I subfamily. Zn(2+) serves as cofactor.

The protein localises to the nucleus. It is found in the nucleolus. The enzyme catalyses N(6)-acetyl-L-lysyl-[protein] + NAD(+) + H2O = 2''-O-acetyl-ADP-D-ribose + nicotinamide + L-lysyl-[protein]. In terms of biological role, NAD-dependent histone deacetylase, which contributes to both telomeric and centromeric silencing, proper cell cycle progression, DNA damage control, recombination, and genomic maintenance. The protein is NAD-dependent protein deacetylase hst4 (hst4) of Schizosaccharomyces pombe (strain 972 / ATCC 24843) (Fission yeast).